Here is a 395-residue protein sequence, read N- to C-terminus: Small RNA 2'-O-methyltransferase (395 aa).

Aspartate 79 and serine 115 together coordinate S-adenosyl-L-methionine. Glutamate 133, glutamate 136, histidine 137, and histidine 182 together coordinate Mg(2+).

This sequence belongs to the methyltransferase superfamily. HEN1 family. It depends on Mg(2+) as a cofactor. In terms of tissue distribution, specifically expressed in testis.

It is found in the cytoplasm. It catalyses the reaction small RNA 3'-end nucleotide + S-adenosyl-L-methionine = small RNA 3'-end 2'-O-methylnucleotide + S-adenosyl-L-homocysteine + H(+). Functionally, methyltransferase that adds a 2'-O-methyl group at the 3'-end of piRNAs, a class of 24 to 30 nucleotide RNAs that are generated by a Dicer-independent mechanism and are primarily derived from transposons and other repeated sequence elements. This probably protects the 3'-end of piRNAs from uridylation activity and subsequent degradation. Stabilization of piRNAs is essential for gametogenesis. The protein is Small RNA 2'-O-methyltransferase (Henmt1) of Mus musculus (Mouse).